We begin with the raw amino-acid sequence, 647 residues long: Knirps-related protein (647 aa).

Positions Asn11–Tyr87 form a DNA-binding region, nuclear receptor. NR C4-type zinc fingers lie at residues Cys14 to Cys34 and Cys51 to Cys75. Disordered stretches follow at residues Met111–Ser142, His196–Phe274, Gly340–Asn383, and Ser402–Leu600. Residues Ala120–Met134 are compositionally biased toward gly residues. Low complexity-rich tracts occupy residues Val200–Val223 and Gly232–Ser247. Gly residues predominate over residues His248 to Thr260. Polar residues-rich tracts occupy residues Ser370–Leu381 and Asp420–Glu432. Basic and acidic residues-rich tracts occupy residues Ser433–Asn443 and Gln480–Arg491. The span at Leu502 to Glu519 shows a compositional bias: low complexity. Residues Ile520–Asp541 are compositionally biased toward acidic residues. A compositionally biased stretch (basic and acidic residues) spans Leu542–Ala556. A compositionally biased stretch (polar residues) spans Thr567–His579. A compositionally biased stretch (low complexity) spans Asn580–Ile599.

Belongs to the nuclear hormone receptor family. NR0 subfamily.

Its subcellular location is the nucleus. The sequence is that of Knirps-related protein (knrl) from Drosophila melanogaster (Fruit fly).